The sequence spans 386 residues: Methionine aminopeptidase 1 (386 aa).

Ala-2 bears the N-acetylalanine mark. The C6H2-type zinc-finger motif lies at 6–59 (TRVCETDGCSSEAKLQCPTCIKLGIQGSYFCSQECFKGSWATHKLLHKKAKDEK). Zn(2+) is bound by residues Cys-9, Cys-14, Cys-22, Cys-25, Cys-36, Cys-40, His-48, His-52, and Lys-53. His-203 contacts a protein. Residues Asp-220, Asp-231, and His-294 each coordinate Zn(2+). His-301 contacts a protein. Zn(2+) contacts are provided by Glu-327 and Glu-358.

It belongs to the peptidase M24A family. Methionine aminopeptidase type 1 subfamily. As to quaternary structure, associates with the 60S ribosomal subunit of the 80S translational complex. Requires Zn(2+) as cofactor. Co(2+) serves as cofactor. It depends on Mn(2+) as a cofactor. The cofactor is Fe(2+).

It is found in the cytoplasm. The enzyme catalyses Release of N-terminal amino acids, preferentially methionine, from peptides and arylamides.. Functionally, cotranslationally removes the N-terminal methionine from nascent proteins. The N-terminal methionine is often cleaved when the second residue in the primary sequence is small and uncharged (Met-Ala-, Cys, Gly, Pro, Ser, Thr, or Val). This chain is Methionine aminopeptidase 1 (Metap1), found in Mus musculus (Mouse).